Consider the following 401-residue polypeptide: Transcriptional regulator Myc-2 (401 aa).

O-linked (GlcNAc) threonine glycosylation occurs at Thr58. The 9aaTAD motif lies at 76–84 (EMVSEFLGD). Disordered regions lie at residues 177-251 (SSKS…SRYP) and 286-325 (LESS…HNVL). Over residues 205-230 (DSEDEEEEEEEEEEEEEEEEEEEEID) the composition is skewed to acidic residues. Basic and acidic residues predominate over residues 233–247 (TVEKRQKRNEAEVSD). The span at 288–297 (SSSSNNSSSN) shows a compositional bias: low complexity. Positions 317 to 369 (DKRRTHNVLERQRRNELKLSFFALRDEIPEVANNEKAAKVVILKKATECIHSM) constitute a bHLH domain. A leucine-zipper region spans residues 376-397 (LLSIKEQLRRKSEQLKHRLQQL).

In terms of assembly, efficient DNA binding requires dimerization with another bHLH protein. Binds DNA as a heterodimer with MAX.

It is found in the nucleus. Transcription factor that binds DNA in a non-specific manner, yet also specifically recognizes the core sequence 5'-CAC[GA]TG-3'. Activates the transcription of growth-related genes. In Cyprinus carpio (Common carp), this protein is Transcriptional regulator Myc-2 (mycb).